We begin with the raw amino-acid sequence, 367 residues long: Ribosomal RNA large subunit methyltransferase M (367 aa).

S-adenosyl-L-methionine is bound by residues Ser-188, 221-224 (CPGG), Asp-240, Asp-260, and Asp-277. The active-site Proton acceptor is Lys-306.

This sequence belongs to the class I-like SAM-binding methyltransferase superfamily. RNA methyltransferase RlmE family. RlmM subfamily. In terms of assembly, monomer.

It is found in the cytoplasm. The enzyme catalyses cytidine(2498) in 23S rRNA + S-adenosyl-L-methionine = 2'-O-methylcytidine(2498) in 23S rRNA + S-adenosyl-L-homocysteine + H(+). Its function is as follows. Catalyzes the 2'-O-methylation at nucleotide C2498 in 23S rRNA. The chain is Ribosomal RNA large subunit methyltransferase M from Serratia proteamaculans (strain 568).